The chain runs to 274 residues: NH(3)-dependent NAD(+) synthetase (274 aa).

Position 46-53 (46-53) interacts with ATP; sequence GISGGQDS. Asp-52 is a binding site for Mg(2+). Residue Arg-140 coordinates deamido-NAD(+). Position 160 (Thr-160) interacts with ATP. Residue Glu-165 coordinates Mg(2+). Residues Lys-173 and Asp-180 each coordinate deamido-NAD(+). Lys-189 and Thr-211 together coordinate ATP. Residue 260–261 coordinates deamido-NAD(+); sequence HK.

The protein belongs to the NAD synthetase family. Homodimer.

It carries out the reaction deamido-NAD(+) + NH4(+) + ATP = AMP + diphosphate + NAD(+) + H(+). It functions in the pathway cofactor biosynthesis; NAD(+) biosynthesis; NAD(+) from deamido-NAD(+) (ammonia route): step 1/1. Its function is as follows. Catalyzes the ATP-dependent amidation of deamido-NAD to form NAD. Uses ammonia as a nitrogen source. This is NH(3)-dependent NAD(+) synthetase from Streptococcus uberis (strain ATCC BAA-854 / 0140J).